The chain runs to 842 residues: Alanine--tRNA ligase (842 aa).

Residues His549, His553, Cys650, and His654 each coordinate Zn(2+).

Belongs to the class-II aminoacyl-tRNA synthetase family. It depends on Zn(2+) as a cofactor.

It localises to the cytoplasm. It catalyses the reaction tRNA(Ala) + L-alanine + ATP = L-alanyl-tRNA(Ala) + AMP + diphosphate. Catalyzes the attachment of alanine to tRNA(Ala) in a two-step reaction: alanine is first activated by ATP to form Ala-AMP and then transferred to the acceptor end of tRNA(Ala). Also edits incorrectly charged Ser-tRNA(Ala) and Gly-tRNA(Ala) via its editing domain. The sequence is that of Alanine--tRNA ligase from Campylobacter jejuni (strain RM1221).